The primary structure comprises 207 residues: MASQAPRDFEAQALGLVPIVVETSGRGERSYDIYSRLLKERIVFMVGEVNDQTANLVVAQLLFLESENPDKDISLYINSPGGSVSAGMAIYDTMQFVKPDVSTLCMGLAASMGAFLLASGAKGKRYALPNARVMIHQPLGGARGQASDIEIQAREILYLRDRLNHLLAHHTGQDVERIARDTDRDNFMSSEDAKAYGLIDHVSTKRP.

Ser111 acts as the Nucleophile in catalysis. Residue His136 is part of the active site.

It belongs to the peptidase S14 family. In terms of assembly, fourteen ClpP subunits assemble into 2 heptameric rings which stack back to back to give a disk-like structure with a central cavity, resembling the structure of eukaryotic proteasomes.

The protein resides in the cytoplasm. It catalyses the reaction Hydrolysis of proteins to small peptides in the presence of ATP and magnesium. alpha-casein is the usual test substrate. In the absence of ATP, only oligopeptides shorter than five residues are hydrolyzed (such as succinyl-Leu-Tyr-|-NHMec, and Leu-Tyr-Leu-|-Tyr-Trp, in which cleavage of the -Tyr-|-Leu- and -Tyr-|-Trp bonds also occurs).. Its function is as follows. Cleaves peptides in various proteins in a process that requires ATP hydrolysis. Has a chymotrypsin-like activity. Plays a major role in the degradation of misfolded proteins. This Burkholderia mallei (strain ATCC 23344) protein is ATP-dependent Clp protease proteolytic subunit.